We begin with the raw amino-acid sequence, 212 residues long: Endonuclease III (212 aa).

The region spanning 108 to 127 (FKELVKLPGVGRKTANVVLN) is the HhH domain. [4Fe-4S] cluster-binding residues include C187, C194, C197, and C203.

This sequence belongs to the Nth/MutY family. [4Fe-4S] cluster serves as cofactor.

It carries out the reaction 2'-deoxyribonucleotide-(2'-deoxyribose 5'-phosphate)-2'-deoxyribonucleotide-DNA = a 3'-end 2'-deoxyribonucleotide-(2,3-dehydro-2,3-deoxyribose 5'-phosphate)-DNA + a 5'-end 5'-phospho-2'-deoxyribonucleoside-DNA + H(+). Its function is as follows. DNA repair enzyme that has both DNA N-glycosylase activity and AP-lyase activity. The DNA N-glycosylase activity releases various damaged pyrimidines from DNA by cleaving the N-glycosidic bond, leaving an AP (apurinic/apyrimidinic) site. The AP-lyase activity cleaves the phosphodiester bond 3' to the AP site by a beta-elimination, leaving a 3'-terminal unsaturated sugar and a product with a terminal 5'-phosphate. The protein is Endonuclease III of Rickettsia prowazekii (strain Madrid E).